Here is a 1576-residue protein sequence, read N- to C-terminus: Calmodulin-regulated spectrin-associated protein 1 (1576 aa).

Positions 217–332 constitute a Calponin-homology (CH) domain; that stretch reads ESPSHPKVRY…FIAELFWWFE (116 aa). Disordered stretches follow at residues 415 to 447, 549 to 572, 595 to 653, and 811 to 852; these read HPLL…TRAD, DLEL…RRPA, KEKH…LESD, and YETK…QNRD. The span at 428-439 shows a compositional bias: basic and acidic residues; it reads VKPEESLNHRDQ. Residues 554–566 show a composition bias toward low complexity; it reads SVSSRASSQMSTS. A compositionally biased stretch (basic and acidic residues) spans 595 to 611; that stretch reads KEKHMVPKSEEYGEGKQ. Polar residues-rich tracts occupy residues 613–626 and 642–651; these read GFSS…NQSF and RTFTPLSSLE. The segment covering 813–824 has biased composition (low complexity); sequence TKSSTSSSQKTT. Residues 840–852 show a composition bias toward basic and acidic residues; that stretch reads QRREQSPGRQNRD. Coiled-coil stretches lie at residues 857 to 889 and 992 to 1022; these read LASE…SARQ and DVNE…QQQE. Disordered regions lie at residues 1108 to 1149, 1178 to 1236, and 1274 to 1422; these read LKSV…RLHN, SSRV…ISDD, and RLRK…DWEN. Over residues 1116–1131 the composition is skewed to low complexity; that stretch reads SPSVPTEESPVEVVPE. Residues 1178-1189 show a composition bias toward polar residues; the sequence is SSRVAGVSTSES. Composition is skewed to basic and acidic residues over residues 1195–1204, 1225–1236, and 1274–1323; these read VPVDERHKSS, HPEKTKDIISDD, and RLRK…KQEQ. Residues 1254–1315 are a coiled coil; it reads ELAKKRAAFL…KARRELIKQE (62 aa). The span at 1333-1346 shows a compositional bias: basic residues; the sequence is PKPKPKSKKTRPKS. A compositionally biased stretch (polar residues) spans 1354–1366; sequence SDSGTKYSSTPDN. Residues 1367–1382 show a composition bias toward low complexity; the sequence is LSSAQSGSSLSLASGA. The segment covering 1383 to 1394 has biased composition (polar residues); that stretch reads TTEAESVHSGGT. In terms of domain architecture, CKK spans 1437–1571; the sequence is GPKLYKEPSS…QAKRPALPKK (135 aa).

This sequence belongs to the CAMSAP1 family.

It localises to the cytoplasm. The protein resides in the cytoskeleton. Functionally, key microtubule-organizing protein that specifically binds the minus-end of non-centrosomal microtubules and regulates their dynamics and organization. Specifically recognizes growing microtubule minus-ends and stabilizes microtubules. Acts on free microtubule minus-ends that are not capped by microtubule-nucleating proteins or other factors and protects microtubule minus-ends from depolymerization. In contrast to camsap2 and camsap3, tracks along the growing tips of minus-end microtubules without significantly affecting the polymerization rate: binds at the very tip of the microtubules minus-end and acts as a minus-end tracking protein (-TIP) that dissociates from microtubules after allowing tubulin incorporation. Through interaction with spectrin may regulate neurite outgrowth. The polypeptide is Calmodulin-regulated spectrin-associated protein 1 (camsap1) (Xenopus laevis (African clawed frog)).